The sequence spans 122 residues: Ribonuclease P protein component (122 aa).

It belongs to the RnpA family. In terms of assembly, consists of a catalytic RNA component (M1 or rnpB) and a protein subunit.

The catalysed reaction is Endonucleolytic cleavage of RNA, removing 5'-extranucleotides from tRNA precursor.. Its function is as follows. RNaseP catalyzes the removal of the 5'-leader sequence from pre-tRNA to produce the mature 5'-terminus. It can also cleave other RNA substrates such as 4.5S RNA. The protein component plays an auxiliary but essential role in vivo by binding to the 5'-leader sequence and broadening the substrate specificity of the ribozyme. The sequence is that of Ribonuclease P protein component from Synechococcus elongatus (strain ATCC 33912 / PCC 7942 / FACHB-805) (Anacystis nidulans R2).